A 310-amino-acid chain; its full sequence is Aminoacyl tRNA synthase complex-interacting multifunctional protein 1 (310 aa).

N-acetylalanine is present on A2. Positions 6–46 (AVLKRLEQKGAEADQIIEYLKQQVALLKEKAILQATMREEK) are required for fibroblast proliferation. The interval 54-192 (KLKKEIEELK…APRTVVSGLV (139 aa)) is interaction with HSP90B1. Over residues 92–110 (ASESVVQSPSVATTASPAT) the composition is skewed to polar residues. The interval 92–147 (ASESVVQSPSVATTASPATKEQIKAGEEKKVKEKTEKKGEKKEKQQSAAASTDSKP) is disordered. The segment at 101 to 115 (SVATTASPATKEQIK) is required for endothelial cell death. The segment covering 112–136 (EQIKAGEEKKVKEKTEKKGEKKEKQ) has biased composition (basic and acidic residues). The interval 115–190 (KAGEEKKVKE…EAAPRTVVSG (76 aa)) is required for endothelial cell migration. S138 carries the post-translational modification Phosphoserine. Residues 149–250 (DASRLDLRIG…NGSVPGDRIT (102 aa)) enclose the tRNA-binding domain. K267 is modified (N6-succinyllysine).

Homodimer. Part of the multisynthetase complex (MSC), a multisubunit complex that groups tRNA ligases for Arg (RARS1), Asp (DARS1), Gln (QARS1), Ile (IARS1), Leu (LARS1), Lys (KARS1), Met (MARS1) the bifunctional ligase for Glu and Pro (EPRS1) and the auxiliary subunits AIMP1/p43, AIMP2/p38 and EEF1E1/p18. Interacts (via N-terminus) with RARS1 (via N-terminus). Part of a complex composed of RARS1, QARS1 and AIMP1. Interacts (via C-terminus) with SMURF2. Interacts (via N-terminus) with HSP90B1/gp96 (via C-terminus). Interacts with PSMA7. Interacts with TARS3. Post-translationally, cleaved by caspase-7 in response to apoptosis to produce EMAP-II. Highly expressed in salivary glands and pancreatic alpha cells in the adult (at protein level). In the embryo, expressed primarily at sites of tissue remodeling such as ganglia, developing bones and teeth.

The protein resides in the nucleus. The protein localises to the cytoplasm. Its subcellular location is the cytosol. It is found in the secreted. It localises to the endoplasmic reticulum. The protein resides in the golgi apparatus. Non-catalytic component of the multisynthase complex. Stimulates the catalytic activity of cytoplasmic arginyl-tRNA synthase. Binds tRNA. Possesses inflammatory cytokine activity. Negatively regulates TGF-beta signaling through stabilization of SMURF2 by binding to SMURF2 and inhibiting its SMAD7-mediated degradation. Involved in glucose homeostasis through induction of glucagon secretion at low glucose levels. Promotes dermal fibroblast proliferation and wound repair. Regulates KDELR1-mediated retention of HSP90B1/gp96 in the endoplasmic reticulum. Plays a role in angiogenesis by inducing endothelial cell migration at low concentrations and endothelian cell apoptosis at high concentrations. Induces maturation of dendritic cells and monocyte cell adhesion. Modulates endothelial cell responses by degrading HIF-1A through interaction with PSMA7. The polypeptide is Aminoacyl tRNA synthase complex-interacting multifunctional protein 1 (Aimp1) (Mus musculus (Mouse)).